Consider the following 215-residue polypeptide: Pre-hexon-linking protein VIII (215 aa).

A Phosphothreonine; by host modification is found at T62. Residues 110–150 (AWINYKNGSVRYEAPLQLAEEQVGGPLNAFAIKHQLQLAGG) constitute a propeptide that is removed on maturation.

Belongs to the adenoviridae hexon-linking protein family. As to quaternary structure, interacts with the peripentonal hexons as well as the hexons in the facets. Part of a complex composed of the core-capsid bridging protein, the endosome lysis protein VI and the hexon-linking protein VIII; these interactions bridge the virus core to the capsid. Post-translationally, cleaved by the viral protease during virion maturation. May cause the middle segment to be shed from the capsid.

Its subcellular location is the virion. The protein resides in the host nucleus. Its function is as follows. Structural component of the virion that acts as a cement protein on the capsid interior and which glue the peripentonal hexons and group-of-nine hexons together. This Murine adenovirus A serotype 1 (MAdV-1) protein is Pre-hexon-linking protein VIII.